The following is a 190-amino-acid chain: Probable RNA-binding protein 18 (190 aa).

Residues histidine 25–alanine 106 form the RRM domain. A disordered region spans residues valine 166 to arginine 190.

This chain is Probable RNA-binding protein 18 (RBM18), found in Pongo abelii (Sumatran orangutan).